The following is a 1140-amino-acid chain: uncharacterized protein (1140 aa).

Disordered regions lie at residues 1–49 (MGSS…TSPE), 97–243 (SSDI…STIS), 280–427 (TSSS…KSSV), 512–541 (ASSTLGSKVSSSNSRMATSKTSSTSSDLSK), 702–747 (FSTP…STAS), 916–1059 (CPEK…PIGR), and 1080–1103 (LSSSTEKVNRSTTKPTAAIHGTSS). A compositionally biased stretch (polar residues) spans 105–129 (VNDVESSTSGPSNSYSALSSTNAQL). 3 stretches are compositionally biased toward low complexity: residues 130–154 (SSSTTETDSISSSAIQTSSPQTSSS), 172–214 (TTAS…TTSD), and 221–243 (SSSTSDVSSLLSSTSSPASSTIS). Over residues 516–528 (LGSKVSSSNSRMA) the composition is skewed to polar residues. 2 stretches are compositionally biased toward low complexity: residues 529–541 (TSKTSSTSSDLSK) and 703–718 (STPESSPTTSTLVTSE). The span at 719–733 (APSTVSSMTTSAPFI) shows a compositional bias: polar residues. Over residues 734–747 (NNSTSARPSPSTAS) the composition is skewed to low complexity. The segment covering 949 to 961 (SFKDMKTSQETKK) has biased composition (basic and acidic residues). Low complexity predominate over residues 977–997 (EKTSPTTKASPSTSPSESKAA). 3 stretches are compositionally biased toward polar residues: residues 998-1023 (GNTSVATNASPSTSPSESQGTGSTSV), 1031-1055 (TKNSEGVSTTKAKNTSTVAKSSTES), and 1089-1103 (RSTTKPTAAIHGTSS).

This is an uncharacterized protein from Saccharomyces cerevisiae (strain ATCC 204508 / S288c) (Baker's yeast).